A 411-amino-acid polypeptide reads, in one-letter code: Floricaula/leafy-like protein (411 aa).

Residues 220–259 (PDTNYGSEQTKACKKQKRRRSKDSGEDGEERQREHPFIVT) are disordered. Residues 231-240 (ACKKQKRRRS) are compositionally biased toward basic residues. Basic and acidic residues predominate over residues 241 to 255 (KDSGEDGEERQREHP). 3 DNA-binding regions span residues 252–256 (REHPF), 321–328 (NKPKMRHY), and 392–395 (YVPT).

This sequence belongs to the FLO/LFY family. In terms of tissue distribution, expressed in vegetative buds and male cones but not in female cones, vascular tissue, roots or secondary needles.

It localises to the nucleus. Its function is as follows. Probable transcription factor. This Pinus radiata (Monterey pine) protein is Floricaula/leafy-like protein (FLL).